A 509-amino-acid chain; its full sequence is Maturase K (509 aa).

The protein belongs to the intron maturase 2 family. MatK subfamily.

The protein resides in the plastid. The protein localises to the chloroplast. Functionally, usually encoded in the trnK tRNA gene intron. Probably assists in splicing its own and other chloroplast group II introns. In Stylosanthes hamata (Caribbean stylo), this protein is Maturase K.